Here is a 64-residue protein sequence, read N- to C-terminus: Large ribosomal subunit protein bL33 (64 aa).

This sequence belongs to the bacterial ribosomal protein bL33 family.

The sequence is that of Large ribosomal subunit protein bL33 from Synechococcus sp. (strain JA-3-3Ab) (Cyanobacteria bacterium Yellowstone A-Prime).